We begin with the raw amino-acid sequence, 250 residues long: Isoprenyl transferase (250 aa).

Asp-26 is an active-site residue. Residue Asp-26 coordinates Mg(2+). Substrate-binding positions include 27–30 (GNGR), Trp-31, Arg-39, His-43, and 71–73 (STE). Residue Asn-74 is the Proton acceptor of the active site. Substrate contacts are provided by residues Trp-75, Arg-77, Arg-198, and 204 to 206 (RLS). Residue Glu-217 coordinates Mg(2+).

Belongs to the UPP synthase family. Homodimer. The cofactor is Mg(2+).

In terms of biological role, catalyzes the condensation of isopentenyl diphosphate (IPP) with allylic pyrophosphates generating different type of terpenoids. This chain is Isoprenyl transferase, found in Streptococcus agalactiae serotype III (strain NEM316).